The primary structure comprises 488 residues: Ribulose bisphosphate carboxylase large chain (488 aa).

Substrate contacts are provided by N127 and T177. Catalysis depends on K179, which acts as the Proton acceptor. K181 is a substrate binding site. Mg(2+)-binding residues include K205, D207, and E208. Residue K205 is modified to N6-carboxylysine. The active-site Proton acceptor is H297. Substrate is bound by residues R298, H330, and S382.

It belongs to the RuBisCO large chain family. Type I subfamily. As to quaternary structure, heterohexadecamer of 8 large chains and 8 small chains. Mg(2+) serves as cofactor.

The protein localises to the plastid. It is found in the chloroplast. It catalyses the reaction 2 (2R)-3-phosphoglycerate + 2 H(+) = D-ribulose 1,5-bisphosphate + CO2 + H2O. The catalysed reaction is D-ribulose 1,5-bisphosphate + O2 = 2-phosphoglycolate + (2R)-3-phosphoglycerate + 2 H(+). In terms of biological role, ruBisCO catalyzes two reactions: the carboxylation of D-ribulose 1,5-bisphosphate, the primary event in carbon dioxide fixation, as well as the oxidative fragmentation of the pentose substrate in the photorespiration process. Both reactions occur simultaneously and in competition at the same active site. The protein is Ribulose bisphosphate carboxylase large chain of Rhodomonas salina (Cryptomonas salina).